Consider the following 309-residue polypeptide: Ribosomal RNA small subunit methyltransferase H (309 aa).

S-adenosyl-L-methionine contacts are provided by residues 36 to 38, D55, F81, D102, and Q109; that span reads AGH.

Belongs to the methyltransferase superfamily. RsmH family.

It localises to the cytoplasm. It catalyses the reaction cytidine(1402) in 16S rRNA + S-adenosyl-L-methionine = N(4)-methylcytidine(1402) in 16S rRNA + S-adenosyl-L-homocysteine + H(+). Specifically methylates the N4 position of cytidine in position 1402 (C1402) of 16S rRNA. This Mycoplasma genitalium (strain ATCC 33530 / DSM 19775 / NCTC 10195 / G37) (Mycoplasmoides genitalium) protein is Ribosomal RNA small subunit methyltransferase H.